The sequence spans 245 residues: Probable phosphatase YcdX (245 aa).

Zn(2+) is bound by residues His-7, His-9, His-15, His-40, Glu-73, His-101, His-131, Asp-192, and His-194.

This sequence belongs to the PHP family. Homotrimer. Zn(2+) serves as cofactor.

In Salmonella arizonae (strain ATCC BAA-731 / CDC346-86 / RSK2980), this protein is Probable phosphatase YcdX.